The following is a 295-amino-acid chain: Pyridoxal 5'-phosphate synthase subunit PdxS (295 aa).

Asp25 serves as a coordination point for D-ribose 5-phosphate. Catalysis depends on Lys82, which acts as the Schiff-base intermediate with D-ribose 5-phosphate. Gly154 serves as a coordination point for D-ribose 5-phosphate. Arg166 contacts D-glyceraldehyde 3-phosphate. D-ribose 5-phosphate is bound by residues Gly215 and Gly236–Ser237.

Belongs to the PdxS/SNZ family. As to quaternary structure, in the presence of PdxT, forms a dodecamer of heterodimers.

The catalysed reaction is aldehydo-D-ribose 5-phosphate + D-glyceraldehyde 3-phosphate + L-glutamine = pyridoxal 5'-phosphate + L-glutamate + phosphate + 3 H2O + H(+). Its pathway is cofactor biosynthesis; pyridoxal 5'-phosphate biosynthesis. Functionally, catalyzes the formation of pyridoxal 5'-phosphate from ribose 5-phosphate (RBP), glyceraldehyde 3-phosphate (G3P) and ammonia. The ammonia is provided by the PdxT subunit. Can also use ribulose 5-phosphate and dihydroxyacetone phosphate as substrates, resulting from enzyme-catalyzed isomerization of RBP and G3P, respectively. This is Pyridoxal 5'-phosphate synthase subunit PdxS from Listeria welshimeri serovar 6b (strain ATCC 35897 / DSM 20650 / CCUG 15529 / CIP 8149 / NCTC 11857 / SLCC 5334 / V8).